The chain runs to 160 residues: MPSLTHLDATGAANMVDVSDKAPTARTARAEGTIVMLPETLRLIREGDAKKGDVLGTARLAGIMAAKRTHELIPLCHPLLLAKVRVDCEPDPALPGIRITAEVKVQGPTGVEMEALTAVSVACLTVYDMVKAADRGMRIEGIRLLQKSGGRSGLYEAEPA.

Substrate is bound by residues leucine 75–histidine 77 and methionine 113–glutamate 114. Aspartate 128 is an active-site residue.

The protein belongs to the MoaC family. In terms of assembly, homohexamer; trimer of dimers.

It catalyses the reaction (8S)-3',8-cyclo-7,8-dihydroguanosine 5'-triphosphate = cyclic pyranopterin phosphate + diphosphate. The protein operates within cofactor biosynthesis; molybdopterin biosynthesis. In terms of biological role, catalyzes the conversion of (8S)-3',8-cyclo-7,8-dihydroguanosine 5'-triphosphate to cyclic pyranopterin monophosphate (cPMP). This is Cyclic pyranopterin monophosphate synthase from Methylobacterium nodulans (strain LMG 21967 / CNCM I-2342 / ORS 2060).